The chain runs to 483 residues: Alginate biosynthesis protein AlgA (483 aa).

This sequence belongs to the mannose-6-phosphate isomerase type 2 family. As to quaternary structure, monomer. Requires Co(2+) as cofactor.

The catalysed reaction is D-mannose 6-phosphate = D-fructose 6-phosphate. The enzyme catalyses alpha-D-mannose 1-phosphate + GTP + H(+) = GDP-alpha-D-mannose + diphosphate. Its pathway is nucleotide-sugar biosynthesis; GDP-alpha-D-mannose biosynthesis; GDP-alpha-D-mannose from alpha-D-mannose 1-phosphate (GTP route): step 1/1. It participates in nucleotide-sugar biosynthesis; GDP-alpha-D-mannose biosynthesis; alpha-D-mannose 1-phosphate from D-fructose 6-phosphate: step 1/2. In terms of biological role, produces a precursor for alginate polymerization. The alginate layer provides a protective barrier against host immune defenses and antibiotics. This chain is Alginate biosynthesis protein AlgA (algA), found in Pseudomonas syringae pv. tomato (strain ATCC BAA-871 / DC3000).